The primary structure comprises 100 residues: MYB-like transcription factor TCL2 (100 aa).

Residues 37–74 (TEQEEDLIFRMHRLVGDRWDLIAGRVVGREAKDIERYW) enclose the Myb-like domain.

As to quaternary structure, interacts with GL3. In terms of tissue distribution, expressed in cotyledons, petioles, rosette leaves, hydathodes, cauline leaves, stems, pedicels and flower buds.

It is found in the nucleus. MYB-type transcription factor involved in trichome cell specification. Acts as a negative regulator of trichome patterning and formation. May function by suppressing the expression of GL3. The sequence is that of MYB-like transcription factor TCL2 (TCL2) from Arabidopsis thaliana (Mouse-ear cress).